The chain runs to 171 residues: Large ribosomal subunit protein uL10 (171 aa).

It belongs to the universal ribosomal protein uL10 family. As to quaternary structure, part of the ribosomal stalk of the 50S ribosomal subunit. The N-terminus interacts with L11 and the large rRNA to form the base of the stalk. The C-terminus forms an elongated spine to which L12 dimers bind in a sequential fashion forming a multimeric L10(L12)X complex.

Its function is as follows. Forms part of the ribosomal stalk, playing a central role in the interaction of the ribosome with GTP-bound translation factors. The protein is Large ribosomal subunit protein uL10 of Zymomonas mobilis subsp. mobilis (strain ATCC 31821 / ZM4 / CP4).